We begin with the raw amino-acid sequence, 170 residues long: Small ribosomal subunit protein bS18c (170 aa).

2 disordered regions span residues 1 to 59 and 151 to 170; these read MYIS…IGPG and NLRNSNQNLRNNNRNLSSDC. 7 consecutive repeats follow at residues 4 to 10, 11 to 17, 18 to 24, 25 to 31, 32 to 38, 39 to 45, and 46 to 52; these read SKQPFRK, SKQTFHK, FKQPFRK, and SKQPFRR. The 7 X 7 AA tandem repeats stretch occupies residues 4–52; that stretch reads SKQPFRKSKQPFRKSKQTFHKSKQPFRKFKQPFRKSKQPFRKSKQPFRR. A compositionally biased stretch (basic residues) spans 7 to 55; it reads PFRKSKQPFRKSKQTFHKSKQPFRKFKQPFRKSKQPFRKSKQPFRRRSR.

This sequence belongs to the bacterial ribosomal protein bS18 family. Part of the 30S ribosomal subunit.

It localises to the plastid. Its subcellular location is the chloroplast. This chain is Small ribosomal subunit protein bS18c (rps18), found in Zea mays (Maize).